A 282-amino-acid chain; its full sequence is Pantothenate synthetase (282 aa).

30 to 37 (MGYFHEGH) contributes to the ATP binding site. Residue histidine 37 is the Proton donor of the active site. (R)-pantoate is bound at residue glutamine 61. Glutamine 61 is a binding site for beta-alanine. An ATP-binding site is contributed by 147–150 (GQKD). Glutamine 153 lines the (R)-pantoate pocket. ATP contacts are provided by residues valine 176 and 184–187 (LSSR).

Belongs to the pantothenate synthetase family. Homodimer.

Its subcellular location is the cytoplasm. The enzyme catalyses (R)-pantoate + beta-alanine + ATP = (R)-pantothenate + AMP + diphosphate + H(+). Its pathway is cofactor biosynthesis; (R)-pantothenate biosynthesis; (R)-pantothenate from (R)-pantoate and beta-alanine: step 1/1. Its function is as follows. Catalyzes the condensation of pantoate with beta-alanine in an ATP-dependent reaction via a pantoyl-adenylate intermediate. The sequence is that of Pantothenate synthetase from Maridesulfovibrio salexigens (strain ATCC 14822 / DSM 2638 / NCIMB 8403 / VKM B-1763) (Desulfovibrio salexigens).